Reading from the N-terminus, the 164-residue chain is Transcription elongation factor GreA (164 aa).

The stretch at 50 to 75 (YHAAREEQGQQEARIRQLQDLLNIAK) forms a coiled coil.

The protein belongs to the GreA/GreB family.

In terms of biological role, necessary for efficient RNA polymerase transcription elongation past template-encoded arresting sites. The arresting sites in DNA have the property of trapping a certain fraction of elongating RNA polymerases that pass through, resulting in locked ternary complexes. Cleavage of the nascent transcript by cleavage factors such as GreA or GreB allows the resumption of elongation from the new 3'terminus. GreA releases sequences of 2 to 3 nucleotides. The chain is Transcription elongation factor GreA from Mycobacterium leprae (strain Br4923).